Consider the following 303-residue polypeptide: Glycine--tRNA ligase alpha subunit (303 aa).

It belongs to the class-II aminoacyl-tRNA synthetase family. As to quaternary structure, tetramer of two alpha and two beta subunits.

It localises to the cytoplasm. It catalyses the reaction tRNA(Gly) + glycine + ATP = glycyl-tRNA(Gly) + AMP + diphosphate. The protein is Glycine--tRNA ligase alpha subunit of Stenotrophomonas maltophilia (strain K279a).